The chain runs to 201 residues: Imidazole glycerol phosphate synthase subunit HisH (201 aa).

One can recognise a Glutamine amidotransferase type-1 domain in the interval 1-201 (MVFIADYGAG…LQVLRNFAEC (201 aa)). The active-site Nucleophile is C79. Residues H183 and E185 contribute to the active site.

As to quaternary structure, heterodimer of HisH and HisF.

The protein localises to the cytoplasm. It catalyses the reaction 5-[(5-phospho-1-deoxy-D-ribulos-1-ylimino)methylamino]-1-(5-phospho-beta-D-ribosyl)imidazole-4-carboxamide + L-glutamine = D-erythro-1-(imidazol-4-yl)glycerol 3-phosphate + 5-amino-1-(5-phospho-beta-D-ribosyl)imidazole-4-carboxamide + L-glutamate + H(+). The enzyme catalyses L-glutamine + H2O = L-glutamate + NH4(+). The protein operates within amino-acid biosynthesis; L-histidine biosynthesis; L-histidine from 5-phospho-alpha-D-ribose 1-diphosphate: step 5/9. In terms of biological role, IGPS catalyzes the conversion of PRFAR and glutamine to IGP, AICAR and glutamate. The HisH subunit catalyzes the hydrolysis of glutamine to glutamate and ammonia as part of the synthesis of IGP and AICAR. The resulting ammonia molecule is channeled to the active site of HisF. In Chlorobium luteolum (strain DSM 273 / BCRC 81028 / 2530) (Pelodictyon luteolum), this protein is Imidazole glycerol phosphate synthase subunit HisH.